We begin with the raw amino-acid sequence, 466 residues long: Cysteine--tRNA ligase (466 aa).

Residue cysteine 27 participates in Zn(2+) binding. The short motif at 29 to 39 is the 'HIGH' region element; the sequence is PTVYDLAHIGN. Positions 211, 236, and 240 each coordinate Zn(2+). Positions 270–274 match the 'KMSKS' region motif; it reads KMSKS. Residue lysine 273 participates in ATP binding.

It belongs to the class-I aminoacyl-tRNA synthetase family. Monomer. Requires Zn(2+) as cofactor.

The protein localises to the cytoplasm. It carries out the reaction tRNA(Cys) + L-cysteine + ATP = L-cysteinyl-tRNA(Cys) + AMP + diphosphate. In Anaplasma marginale (strain St. Maries), this protein is Cysteine--tRNA ligase.